Here is a 492-residue protein sequence, read N- to C-terminus: Probable malate:quinone oxidoreductase 1 (492 aa).

Belongs to the MQO family. The cofactor is FAD.

It catalyses the reaction (S)-malate + a quinone = a quinol + oxaloacetate. The protein operates within carbohydrate metabolism; tricarboxylic acid cycle; oxaloacetate from (S)-malate (quinone route): step 1/1. The chain is Probable malate:quinone oxidoreductase 1 from Staphylococcus aureus (strain MRSA252).